The sequence spans 372 residues: MNEKKELKLILVAARNHLSRGDLKLLLSYLESDDCEFEISLQISEPTEQPELLELHRLVAIPALIKVSPAPKQIFAGSNIFVQLQTWLPRWKQEGVTKDLGINLQPSKIDSIRTQKEFLLEEELLVLRQENETLTKRIESQERLLRMVAHELRTPLTAATLAIQSQKLGQIDIKKLQDVIKRRLEEIELLSQDLLEVGTTKWEALFNPQKIDLGNISAEAILELEKFWRLRKIEIDTDIPSDLPSVYADQRRMRQVFLNLIENALKFSENSGRIKITLIHKTNQWVEITICDKGAGIPVSEQKRIFLDRVRLPQTSEGTSGFGIGLSVCRRIVEVHGGRIWVVSEVGEGSCFHFTVPVWQGQNKDQQHLTKG.

Residues 147–360 (MVAHELRTPL…CFHFTVPVWQ (214 aa)) form the Histidine kinase domain. Position 150 is a phosphohistidine; by autocatalysis (His-150).

As to quaternary structure, homooligomerizes. Interacts with KaiC. Participates in the KaiBC complex, whose core is composed of a KaiC homohexamer and 6 KaiB.

The enzyme catalyses ATP + protein L-histidine = ADP + protein N-phospho-L-histidine.. Functionally, member of the two-component regulatory system SasA/RpaA involved in genome-wide circadian gene expression. One of several clock output pathways. Participates in the Kai clock protein complex, the main circadian regulator in cyanobacteria, via its interaction with KaiC. KaiC enhances the autophosphorylation activity of SasA, which then transfers its phosphate group to RpaA to activate it. In addition to its output function, recruits fold-shifted KaiB (KaiB(fs)) to KaiC to cooperatively form the KaiB(6):KaiC(6) complex (independent of SasA kinase activity). Required for robustness of the circadian rhythm of gene expression and is involved in clock output, also required for adaptation to light/dark cycles. The sequence is that of Adaptive-response sensory-kinase SasA from Prochlorococcus marinus subsp. pastoris (strain CCMP1986 / NIES-2087 / MED4).